Reading from the N-terminus, the 922-residue chain is DNA gyrase subunit A (922 aa).

A compositionally biased stretch (low complexity) spans 1-14 (MTETPTDGGSTPPS). The segment at 1 to 24 (MTETPTDGGSTPPSDGGGPGGRIE) is disordered. A Topo IIA-type catalytic domain is found at 49–518 (LPDVRDGLKP…ADGDLSMEDL (470 aa)). Y137 acts as the O-(5'-phospho-DNA)-tyrosine intermediate in catalysis. The GyrA-box motif lies at 545–551 (QRRGGKG). The disordered stretch occupies residues 861-922 (EANGDDELDE…TEPDPGESDG (62 aa)). Composition is skewed to acidic residues over residues 863–890 (NGDD…DESA) and 912–922 (DTEPDPGESDG).

Belongs to the type II topoisomerase GyrA/ParC subunit family. Heterotetramer, composed of two GyrA and two GyrB chains. In the heterotetramer, GyrA contains the active site tyrosine that forms a transient covalent intermediate with DNA, while GyrB binds cofactors and catalyzes ATP hydrolysis.

It localises to the cytoplasm. It catalyses the reaction ATP-dependent breakage, passage and rejoining of double-stranded DNA.. Its function is as follows. A type II topoisomerase that negatively supercoils closed circular double-stranded (ds) DNA in an ATP-dependent manner to modulate DNA topology and maintain chromosomes in an underwound state. Negative supercoiling favors strand separation, and DNA replication, transcription, recombination and repair, all of which involve strand separation. Also able to catalyze the interconversion of other topological isomers of dsDNA rings, including catenanes and knotted rings. Type II topoisomerases break and join 2 DNA strands simultaneously in an ATP-dependent manner. This is DNA gyrase subunit A from Nocardioides sp. (strain ATCC BAA-499 / JS614).